Here is a 322-residue protein sequence, read N- to C-terminus: Beta-ketoacyl-[acyl-carrier-protein] synthase III (322 aa).

Catalysis depends on residues Cys113 and His249. The interval Gln250–Arg254 is ACP-binding. Asn279 is an active-site residue.

Belongs to the thiolase-like superfamily. FabH family. As to quaternary structure, homodimer.

Its subcellular location is the cytoplasm. It carries out the reaction malonyl-[ACP] + acetyl-CoA + H(+) = 3-oxobutanoyl-[ACP] + CO2 + CoA. The protein operates within lipid metabolism; fatty acid biosynthesis. Its function is as follows. Catalyzes the condensation reaction of fatty acid synthesis by the addition to an acyl acceptor of two carbons from malonyl-ACP. Catalyzes the first condensation reaction which initiates fatty acid synthesis and may therefore play a role in governing the total rate of fatty acid production. Possesses both acetoacetyl-ACP synthase and acetyl transacylase activities. Its substrate specificity determines the biosynthesis of branched-chain and/or straight-chain of fatty acids. The sequence is that of Beta-ketoacyl-[acyl-carrier-protein] synthase III from Marinobacter nauticus (strain ATCC 700491 / DSM 11845 / VT8) (Marinobacter aquaeolei).